We begin with the raw amino-acid sequence, 148 residues long: SsrA-binding protein (148 aa).

Residues 119–148 (AKGKKQHDKRETEKKRDWEREKARLMRSPG) are disordered. A compositionally biased stretch (basic and acidic residues) spans 126 to 142 (DKRETEKKRDWEREKAR).

The protein belongs to the SmpB family.

The protein resides in the cytoplasm. Its function is as follows. Required for rescue of stalled ribosomes mediated by trans-translation. Binds to transfer-messenger RNA (tmRNA), required for stable association of tmRNA with ribosomes. tmRNA and SmpB together mimic tRNA shape, replacing the anticodon stem-loop with SmpB. tmRNA is encoded by the ssrA gene; the 2 termini fold to resemble tRNA(Ala) and it encodes a 'tag peptide', a short internal open reading frame. During trans-translation Ala-aminoacylated tmRNA acts like a tRNA, entering the A-site of stalled ribosomes, displacing the stalled mRNA. The ribosome then switches to translate the ORF on the tmRNA; the nascent peptide is terminated with the 'tag peptide' encoded by the tmRNA and targeted for degradation. The ribosome is freed to recommence translation, which seems to be the essential function of trans-translation. The chain is SsrA-binding protein from Paraburkholderia xenovorans (strain LB400).